The sequence spans 349 residues: MNGTEGNNFYIPLSNRTGLARSPYEYPQYYLAEPWQFKLLAVYMFFLICLGFPINGLTLLVTAQHKKLRQPLNFILVNLAVAGTIMVCFGFTVTFYTAINGYFVLGPTGCAIEGFMATLGGEVALWSLVVLAVERYIVVCKPMGSFKFSASHAFAGCAFTWVMAMACAAPPLVGWSRYIPEGMQCSCGPDYYTLNPEYNNESYVLYMFICHFILPVTIIFFTYGRLVCTVKAAAAQQQESESTQKAEREVTRMVILMVLGFLIAWTPYATVAAWIFFNKGAAFSAQFMAVPAFFSKTSALYNPVIYVLLNKQFRNCMLTTLFCGKNPLGDDESSTVSTSKTEVSSVSPA.

The Extracellular segment spans residues 1–36 (MNGTEGNNFYIPLSNRTGLARSPYEYPQYYLAEPWQ). Residues N2 and N15 are each glycosylated (N-linked (GlcNAc...) asparagine). A helical transmembrane segment spans residues 37 to 61 (FKLLAVYMFFLICLGFPINGLTLLV). The Cytoplasmic segment spans residues 62–73 (TAQHKKLRQPLN). The helical transmembrane segment at 74-99 (FILVNLAVAGTIMVCFGFTVTFYTAI) threads the bilayer. The Extracellular portion of the chain corresponds to 100 to 113 (NGYFVLGPTGCAIE). C110 and C187 form a disulfide bridge. Residues 114-133 (GFMATLGGEVALWSLVVLAV) traverse the membrane as a helical segment. Over 134-152 (ERYIVVCKPMGSFKFSASH) the chain is Cytoplasmic. Residues 153–176 (AFAGCAFTWVMAMACAAPPLVGWS) traverse the membrane as a helical segment. Topologically, residues 177 to 202 (RYIPEGMQCSCGPDYYTLNPEYNNES) are extracellular. Residue N200 is glycosylated (N-linked (GlcNAc...) asparagine). A helical transmembrane segment spans residues 203–230 (YVLYMFICHFILPVTIIFFTYGRLVCTV). Residues 231–252 (KAAAAQQQESESTQKAEREVTR) lie on the Cytoplasmic side of the membrane. The helical transmembrane segment at 253–276 (MVILMVLGFLIAWTPYATVAAWIF) threads the bilayer. Over 277–284 (FNKGAAFS) the chain is Extracellular. A helical membrane pass occupies residues 285–309 (AQFMAVPAFFSKTSALYNPVIYVLL). K296 carries the post-translational modification N6-(retinylidene)lysine. Topologically, residues 310–349 (NKQFRNCMLTTLFCGKNPLGDDESSTVSTSKTEVSSVSPA) are cytoplasmic. The segment at 329–349 (GDDESSTVSTSKTEVSSVSPA) is disordered. The segment covering 334–349 (STVSTSKTEVSSVSPA) has biased composition (low complexity).

The protein belongs to the G-protein coupled receptor 1 family. Opsin subfamily. Phosphorylated on some or all of the serine and threonine residues present in the C-terminal region. As to expression, retinal double cone accessory photoreceptor cell outer segments.

Its subcellular location is the membrane. Visual pigments are the light-absorbing molecules that mediate vision. They consist of an apoprotein, opsin, covalently linked to cis-retinal. The chain is Green-sensitive opsin-4 (opn1mw4) from Danio rerio (Zebrafish).